The following is a 117-amino-acid chain: DNA-directed RNA polymerase II subunit RPB11 (117 aa).

This sequence belongs to the archaeal Rpo11/eukaryotic RPB11/RPC19 RNA polymerase subunit family. As to quaternary structure, component of the RNA polymerase II (Pol II) complex consisting of 12 subunits.

It localises to the nucleus. Its function is as follows. DNA-dependent RNA polymerase catalyzes the transcription of DNA into RNA using the four ribonucleoside triphosphates as substrates. Component of RNA polymerase II which synthesizes mRNA precursors and many functional non-coding RNAs. Pol II is the central component of the basal RNA polymerase II transcription machinery. It is composed of mobile elements that move relative to each other. RPB11 is part of the core element with the central large cleft. In Drosophila melanogaster (Fruit fly), this protein is DNA-directed RNA polymerase II subunit RPB11.